Consider the following 170-residue polypeptide: Peptidyl-prolyl cis-trans isomerase-like 3 (170 aa).

The PPIase cyclophilin-type domain occupies M1–I160.

The protein belongs to the cyclophilin-type PPIase family. PPIL3 subfamily.

The enzyme catalyses [protein]-peptidylproline (omega=180) = [protein]-peptidylproline (omega=0). Functionally, PPIases accelerate the folding of proteins. It catalyzes the cis-trans isomerization of proline imidic peptide bonds in oligopeptides. The protein is Peptidyl-prolyl cis-trans isomerase-like 3 (cyp4) of Rhizopus delemar (strain RA 99-880 / ATCC MYA-4621 / FGSC 9543 / NRRL 43880) (Mucormycosis agent).